A 416-amino-acid chain; its full sequence is Phosphoglycerate kinase (416 aa).

(2R)-3-phosphoglycerate-binding residues include valine 23, aspartate 24, phenylalanine 25, asparagine 26, glutamine 38, arginine 39, serine 62, histidine 63, glycine 65, arginine 66, leucine 121, arginine 122, histidine 168, and arginine 169. Glycine 212 contributes to the ADP binding site. A CDP-binding site is contributed by glycine 212. Alanine 213 and lysine 214 together coordinate AMP. Residue alanine 213 coordinates ATP. Alanine 213 contacts Mg(2+). Aspartate 217 contacts CDP. Mg(2+) is bound at residue aspartate 217. Lysine 218 is an AMP binding site. Position 218 (lysine 218) interacts with ATP. An ADP-binding site is contributed by glycine 236. CDP is bound at residue glycine 236. Residues glycine 237 and glycine 311 each contribute to the AMP site. 2 residues coordinate ATP: glycine 237 and glycine 311. The CDP site is built by glycine 336 and phenylalanine 341. Phenylalanine 341 serves as a coordination point for ADP. Residue glutamate 342 participates in AMP binding. ATP-binding residues include glutamate 342, aspartate 373, and threonine 374. Aspartate 373 is a binding site for Mg(2+).

It belongs to the phosphoglycerate kinase family. As to quaternary structure, monomer. Requires Mg(2+) as cofactor.

The protein localises to the cytoplasm. Its subcellular location is the mitochondrion. The catalysed reaction is (2R)-3-phosphoglycerate + ATP = (2R)-3-phospho-glyceroyl phosphate + ADP. The protein operates within carbohydrate degradation; glycolysis; pyruvate from D-glyceraldehyde 3-phosphate: step 2/5. Catalyzes one of the two ATP producing reactions in the glycolytic pathway via the reversible conversion of 1,3-diphosphoglycerate to 3-phosphoglycerate. Both L- and D- forms of purine and pyrimidine nucleotides can be used as substrates, but the activity is much lower on pyrimidines. Negatively regulates the biosynthesis of acetyl-CoA from pyruvate in the mitochondrion. In Debaryomyces hansenii (strain ATCC 36239 / CBS 767 / BCRC 21394 / JCM 1990 / NBRC 0083 / IGC 2968) (Yeast), this protein is Phosphoglycerate kinase (PGK1).